Consider the following 199-residue polypeptide: Putative acetyltransferase SACOL2570 (199 aa).

The protein belongs to the transferase hexapeptide repeat family.

The polypeptide is Putative acetyltransferase SACOL2570 (Staphylococcus aureus (strain COL)).